Here is a 362-residue protein sequence, read N- to C-terminus: Uroporphyrinogen decarboxylase (362 aa).

Residues 39 to 43 (RQAGR), D88, Y165, T220, and H334 contribute to the substrate site.

This sequence belongs to the uroporphyrinogen decarboxylase family. In terms of assembly, homodimer.

The protein localises to the cytoplasm. It catalyses the reaction uroporphyrinogen III + 4 H(+) = coproporphyrinogen III + 4 CO2. The protein operates within porphyrin-containing compound metabolism; protoporphyrin-IX biosynthesis; coproporphyrinogen-III from 5-aminolevulinate: step 4/4. Catalyzes the decarboxylation of four acetate groups of uroporphyrinogen-III to yield coproporphyrinogen-III. This is Uroporphyrinogen decarboxylase from Synechococcus sp. (strain JA-3-3Ab) (Cyanobacteria bacterium Yellowstone A-Prime).